Reading from the N-terminus, the 84-residue chain is Beta-toxin Tf1a (84 aa).

Residues 1 to 20 (MKGMILFISCLLLIGIVVEC) form the signal peptide. Residues 21 to 82 (KEGYLMDHEG…VWERATNRCG (62 aa)) form the LCN-type CS-alpha/beta domain. Disulfide bonds link C31-C81, C35-C57, C43-C62, and C47-C64. C81 carries the cysteine amide modification.

This sequence belongs to the long (4 C-C) scorpion toxin superfamily. Sodium channel inhibitor family. Beta subfamily. As to expression, expressed by the venom gland.

It localises to the secreted. Beta toxins bind voltage-independently at site-4 of sodium channels (Nav) and shift the voltage of activation toward more negative potentials thereby affecting sodium channel activation and promoting spontaneous and repetitive firing. The toxin induces a leftward shift, on all channels tested (including Blattella germanica and Varroa destructor Nav1), displacing a change in voltage dependence activation to more hyperpolarized potentials. In addition, the toxin mostly inhibits peak current of hNav1.4/SCN4A (53% inhibition of peak current at 100 nM) and hNav1.5/SCN5A (71% inhibition). The sequence is that of Beta-toxin Tf1a from Tityus fasciolatus (Central Brazilian scorpion).